A 631-amino-acid polypeptide reads, in one-letter code: UvrABC system protein C (631 aa).

The disordered stretch occupies residues 1–20 (MKNETEAVADQPPKTGPVKP). Residues 34–112 (MSPGVYRMLD…IKQLKPKFNV (79 aa)) form the GIY-YIG domain. Positions 222–257 (TDLQRQLADGMAAASEAMEFERAAALRDRIRALTNV) constitute a UVR domain.

Belongs to the UvrC family. Interacts with UvrB in an incision complex.

Its subcellular location is the cytoplasm. Its function is as follows. The UvrABC repair system catalyzes the recognition and processing of DNA lesions. UvrC both incises the 5' and 3' sides of the lesion. The N-terminal half is responsible for the 3' incision and the C-terminal half is responsible for the 5' incision. The sequence is that of UvrABC system protein C from Jannaschia sp. (strain CCS1).